Here is a 517-residue protein sequence, read N- to C-terminus: Protein AGENET DOMAIN (AGD)-CONTAINING P1 (517 aa).

The interval 1-35 (MLRPRRSLGVSSPAKQRKKAAPKNSMATRANRKRL) is disordered. Plant Agenet, chromatin-binding stretches follow at residues 37–111 (SYLK…PPMS) and 117–173 (KKIV…EWVD). A disordered region spans residues 177–202 (KPPLEETEEEEDESEEDKLDDSEDEE). Residues 181-202 (EETEEEEDESEEDKLDDSEDEE) are compositionally biased toward acidic residues. Plant Agenet, chromatin-binding regions lie at residues 219-287 (QMFS…PRDE), 289-345 (IDFA…DWVD), 378-446 (QAFS…LESV), and 449-505 (SPFE…EWID).

Expressed ubiquitously during vegetative stage, in meristems (e.g. root tips and shoot apical meristem), and in ovules and young seeds during reproductive stage.

The protein resides in the nucleus. Heterochromatin-binding protein that preferentially occupies long transposons and specifically recognizes the histone H3 'Lys-9' methylation (H3K9me) marks, with a stronger affinity for dimethylated H3K9 (H3K9me2). Required for transcriptional silencing, non-CG DNA methylation (e.g. CHG and CHH regions), and H3K9 dimethylation (H3K9me2) at some loci. Mediates heterochromatin phase separation and chromocenter formation. In Arabidopsis thaliana (Mouse-ear cress), this protein is Protein AGENET DOMAIN (AGD)-CONTAINING P1.